We begin with the raw amino-acid sequence, 893 residues long: Protein FAM186B (893 aa).

Disordered stretches follow at residues 177-207 (GWQG…TMNT), 327-376 (QAED…PSPM), 537-557 (LEKE…DVER), 574-611 (LSLV…QRPM), and 806-827 (KPKK…GPTY). Composition is skewed to polar residues over residues 179 to 188 (QGRSPQTSPS) and 197 to 207 (QMLQDQHTMNT). A coiled-coil region spans residues 303 to 331 (RYHDLLLMKQALEFQLKKAQNATGQAEDL). A compositionally biased stretch (basic and acidic residues) spans 342–353 (SERETLPRKETV).

This sequence belongs to the FAM186 family.

In Homo sapiens (Human), this protein is Protein FAM186B (FAM186B).